Here is a 291-residue protein sequence, read N- to C-terminus: Elongation factor Ts (291 aa).

An involved in Mg(2+) ion dislocation from EF-Tu region spans residues 78-81; it reads TDFV.

This sequence belongs to the EF-Ts family.

It is found in the cytoplasm. In terms of biological role, associates with the EF-Tu.GDP complex and induces the exchange of GDP to GTP. It remains bound to the aminoacyl-tRNA.EF-Tu.GTP complex up to the GTP hydrolysis stage on the ribosome. This is Elongation factor Ts from Ureaplasma urealyticum serovar 10 (strain ATCC 33699 / Western).